Consider the following 601-residue polypeptide: uncharacterized protein (601 aa).

The span at 24–35 shows a compositional bias: basic residues; sequence RKSNVVLKKNKG. 2 disordered regions span residues 24-106 and 171-219; these read RKSN…LKLD and YGND…PREE. Over residues 54 to 81 the composition is skewed to polar residues; it reads SQFSSRDNFRTTQTQASSSSEPSDNTNR. The span at 92–106 shows a compositional bias: basic and acidic residues; the sequence is TPKKEESNAEKLKLD. Phosphoserine is present on residues S236 and S238. Residues 260–283 form a disordered region; that stretch reads RKRKVLSSSSEDDESSSPEDLLKP.

The protein localises to the nucleus. This is an uncharacterized protein from Schizosaccharomyces pombe (strain 972 / ATCC 24843) (Fission yeast).